Here is an 883-residue protein sequence, read N- to C-terminus: DNA mismatch repair protein MutS (883 aa).

The interval 1–25 (MSDSVAPDVPVIREGKNPAQHRDRT) is disordered. Basic and acidic residues predominate over residues 11–25 (VIREGKNPAQHRDRT). Residue 664–671 (GPNASGKS) participates in ATP binding. The disordered stretch occupies residues 857–883 (RKGNTQPRARKSSAETEAKTQQFELPF).

This sequence belongs to the DNA mismatch repair MutS family.

This protein is involved in the repair of mismatches in DNA. It is possible that it carries out the mismatch recognition step. This protein has a weak ATPase activity. The polypeptide is DNA mismatch repair protein MutS (Acaryochloris marina (strain MBIC 11017)).